Here is a 271-residue protein sequence, read N- to C-terminus: Formamidopyrimidine-DNA glycosylase (271 aa).

Residue Pro2 is the Schiff-base intermediate with DNA of the active site. Glu3 acts as the Proton donor in catalysis. Catalysis depends on Lys57, which acts as the Proton donor; for beta-elimination activity. DNA is bound by residues His90, Arg109, and Lys151. The FPG-type zinc finger occupies His236–Lys270. The active-site Proton donor; for delta-elimination activity is the Arg260.

The protein belongs to the FPG family. Monomer. It depends on Zn(2+) as a cofactor.

It carries out the reaction Hydrolysis of DNA containing ring-opened 7-methylguanine residues, releasing 2,6-diamino-4-hydroxy-5-(N-methyl)formamidopyrimidine.. The enzyme catalyses 2'-deoxyribonucleotide-(2'-deoxyribose 5'-phosphate)-2'-deoxyribonucleotide-DNA = a 3'-end 2'-deoxyribonucleotide-(2,3-dehydro-2,3-deoxyribose 5'-phosphate)-DNA + a 5'-end 5'-phospho-2'-deoxyribonucleoside-DNA + H(+). In terms of biological role, involved in base excision repair of DNA damaged by oxidation or by mutagenic agents. Acts as a DNA glycosylase that recognizes and removes damaged bases. Has a preference for oxidized purines, such as 7,8-dihydro-8-oxoguanine (8-oxoG). Has AP (apurinic/apyrimidinic) lyase activity and introduces nicks in the DNA strand. Cleaves the DNA backbone by beta-delta elimination to generate a single-strand break at the site of the removed base with both 3'- and 5'-phosphates. The sequence is that of Formamidopyrimidine-DNA glycosylase from Shewanella halifaxensis (strain HAW-EB4).